The primary structure comprises 304 residues: Putative S-adenosyl-L-methionine-dependent methyltransferase MSMEG_1481/MSMEI_1445 (304 aa).

S-adenosyl-L-methionine is bound by residues Asp-127 and 156 to 157 (DL).

This sequence belongs to the UPF0677 family.

Functionally, exhibits S-adenosyl-L-methionine-dependent methyltransferase activity. The sequence is that of Putative S-adenosyl-L-methionine-dependent methyltransferase MSMEG_1481/MSMEI_1445 from Mycolicibacterium smegmatis (strain ATCC 700084 / mc(2)155) (Mycobacterium smegmatis).